A 436-amino-acid chain; its full sequence is Putative ankyrin repeat protein FPV245 (436 aa).

ANK repeat units follow at residues 1–30, 34–63, 67–96, 98–119, 123–152, 156–185, 189–218, 222–252, 253–283, and 287–317; these read MSVDWRTEIYSGDISLVEKLIKNKGNCINI, ETTTPLIDAIRTGNAKIVELFIKHGAQVNH, KIPNPLLTAIKIGSHDIVKLLLINGVDTSI, PVPCINKEMIKTILDSGVKVNT, KSKTFLHYAIKNNDLEVIKMLFEYGADVNI, NGCYPIHIATRSNSYEIIKLLLEKGAYANV, YGNSPLHNAAKYGDYACIKLVLDHTNNISN, NGVTPLHNAILYNRSAVELLINNRSINDTDV, DGYTPLHYALQPPCSIDIIDILLYNNADISI, and NGRNPIDTAFKYINRDSVIKELLANAVLINE.

The protein is Putative ankyrin repeat protein FPV245 of Vertebrata (FPV).